We begin with the raw amino-acid sequence, 233 residues long: Small ribosomal subunit protein uS3 (233 aa).

Positions 39–107 constitute a KH type-2 domain; it reads IRTFLKRKLY…EVNINIKEER (69 aa). Residues 211 to 233 are disordered; sequence GVQPEKTEESAPAKKPRRARRGK. The segment covering 213 to 222 has biased composition (basic and acidic residues); it reads QPEKTEESAP. A compositionally biased stretch (basic residues) spans 224 to 233; that stretch reads KKPRRARRGK.

The protein belongs to the universal ribosomal protein uS3 family. As to quaternary structure, part of the 30S ribosomal subunit. Forms a tight complex with proteins S10 and S14.

Functionally, binds the lower part of the 30S subunit head. Binds mRNA in the 70S ribosome, positioning it for translation. The chain is Small ribosomal subunit protein uS3 from Campylobacter lari (strain RM2100 / D67 / ATCC BAA-1060).